The sequence spans 891 residues: von Willebrand factor A domain-containing protein 7 (891 aa).

Positions 1–28 (MLPTEVPQSHPGPSALLLLQLLLPPTSA) are cleaved as a signal peptide. The N-linked (GlcNAc...) asparagine glycan is linked to Asn55. Residues 237–272 (PKPPGKCSHGGHFDRSSSQPPRGGINKDSTSPGFSP) form a disordered region. The VWFA domain occupies 313 to 506 (ASSLSFVLDT…SMAALVTLPL (194 aa)).

Expressed at low level in different cell lines.

The protein resides in the secreted. The sequence is that of von Willebrand factor A domain-containing protein 7 (VWA7) from Homo sapiens (Human).